Consider the following 720-residue polypeptide: DNA gyrase subunit B (720 aa).

Low complexity predominate over residues 1 to 26; it reads MVDAMPENPAEEPTAASAAPNPEAVP. The tract at residues 1 to 42 is disordered; that stretch reads MVDAMPENPAEEPTAASAAPNPEAVPDAVGQPEAPVKDRKVP. A Toprim domain is found at 498–612; that stretch reads CEVYIVEGDS…AGHVFLAQPP (115 aa). The Mg(2+) site is built by Glu-504, Asp-577, and Asp-579.

This sequence belongs to the type II topoisomerase GyrB family. As to quaternary structure, heterotetramer, composed of two GyrA and two GyrB chains. In the heterotetramer, GyrA contains the active site tyrosine that forms a transient covalent intermediate with the DNA, while GyrB binds cofactors and catalyzes ATP hydrolysis. Mg(2+) is required as a cofactor. It depends on Mn(2+) as a cofactor. The cofactor is Ca(2+).

It is found in the cytoplasm. It catalyses the reaction ATP-dependent breakage, passage and rejoining of double-stranded DNA.. Supercoiling activity inhibited by novobiocin and coumermycin, DNA wrapping around gyrase is not inhibited. Functionally, a type II topoisomerase that negatively supercoils DNA in an ATP-dependent manner. About 140 bp of DNA wraps around gyrase in the presence or absence of ATP, when ATP is added negative supercoils are made. A type II topoisomerase that negatively supercoils closed circular double-stranded (ds) DNA in an ATP-dependent manner to modulate DNA topology and maintain chromosomes in an underwound state. Negative supercoiling favors strand separation, and DNA replication, transcription, recombination and repair, all of which involve strand separation. Also able to catalyze the interconversion of other topological isomers of dsDNA rings, including catenanes and knotted rings. Type II topoisomerases break and join 2 DNA strands simultaneously in an ATP-dependent manner. This is DNA gyrase subunit B from Micrococcus luteus (strain ATCC 4698 / DSM 20030 / JCM 1464 / CCM 169 / CCUG 5858 / IAM 1056 / NBRC 3333 / NCIMB 9278 / NCTC 2665 / VKM Ac-2230) (Micrococcus lysodeikticus).